Here is a 446-residue protein sequence, read N- to C-terminus: Methionine aminopeptidase 2 (446 aa).

The tract at residues 1–85 (MAGVTEGEDT…KNKKKKKKKI (85 aa)) is disordered. Residues 8–32 (EDTKVIESKINELNIDKPKLEDNNE) are compositionally biased toward basic and acidic residues. The segment covering 42–58 (SGDDDDDDKEEDDDNEI) has biased composition (acidic residues). A compositionally biased stretch (basic residues) spans 73–85 (KKNKNKKKKKKKI). Histidine 197 is a binding site for substrate. Positions 217, 228, and 299 each coordinate a divalent metal cation. A substrate-binding site is contributed by histidine 307. Residues glutamate 332 and glutamate 427 each contribute to the a divalent metal cation site.

Belongs to the peptidase M24A family. Methionine aminopeptidase eukaryotic type 2 subfamily. It depends on Co(2+) as a cofactor. The cofactor is Zn(2+). Mn(2+) serves as cofactor. Fe(2+) is required as a cofactor.

It localises to the cytoplasm. The enzyme catalyses Release of N-terminal amino acids, preferentially methionine, from peptides and arylamides.. In terms of biological role, cotranslationally removes the N-terminal methionine from nascent proteins. The N-terminal methionine is often cleaved when the second residue in the primary sequence is small and uncharged (Met-Ala-, Cys, Gly, Pro, Ser, Thr, or Val). The polypeptide is Methionine aminopeptidase 2 (Candida albicans (strain SC5314 / ATCC MYA-2876) (Yeast)).